The primary structure comprises 664 residues: Glycine--tRNA ligase beta subunit (664 aa).

It belongs to the class-II aminoacyl-tRNA synthetase family. Tetramer of two alpha and two beta subunits.

The protein localises to the cytoplasm. The catalysed reaction is tRNA(Gly) + glycine + ATP = glycyl-tRNA(Gly) + AMP + diphosphate. This chain is Glycine--tRNA ligase beta subunit (glyS), found in Aquifex aeolicus (strain VF5).